Reading from the N-terminus, the 74-residue chain is Protein DELETION OF SUV3 SUPPRESSOR 1(I) (74 aa).

The disordered stretch occupies residues 35-74; the sequence is EKEEVKEVSQQWEDDWDDDDVNDDFSRQLRKELENGTDKK. Positions 46 to 57 are enriched in acidic residues; sequence WEDDWDDDDVND. The segment covering 58 to 74 has biased composition (basic and acidic residues); sequence DFSRQLRKELENGTDKK.

This sequence belongs to the DSS1/SEM1 family. In terms of assembly, part of the 26S proteasome. Interacts with BRCA2A and BRCA2B. Interacts with UCH1 and UCH2. Can form a tripartite complex with both RAD51 and BRCA2B or both DMC1 and BRCA2B.

Functionally, subunit of the 26S proteasome which plays a role in ubiquitin-dependent proteolysis. The protein is Protein DELETION OF SUV3 SUPPRESSOR 1(I) of Arabidopsis thaliana (Mouse-ear cress).